The following is a 187-amino-acid chain: MTNKCLLQIALLLCFSTTALSMSYNLLGFLQRSSSFQCQKLLWQLNGRLEYCLKDRMNFDIPEEIKQPQQFQKEDAALTIYEMLQNIYAIFRQDLSSTGWNETIVENLLANVYHQIDHLKTILEEKLEKEDFTRGKFVSSLHLKRYYGRILHYLKAKEYSHCAWTIVRVEILRNFFFINKLTGYLRN.

Residues 1–21 (MTNKCLLQIALLLCFSTTALS) form the signal peptide. At tyrosine 24 the chain carries Phosphotyrosine. A disulfide bridge connects residues cysteine 52 and cysteine 162. N-linked (GlcNAc...) asparagine glycosylation occurs at asparagine 101.

It belongs to the alpha/beta interferon family. In terms of assembly, monomer.

Its subcellular location is the secreted. Functionally, type I interferon cytokine that plays a key role in the innate immune response to infection, developing tumors and other inflammatory stimuli. Signals via binding to high-affinity (IFNAR2) and low-affinity (IFNAR1) heterodimeric receptor, activating the canonical Jak-STAT signaling pathway resulting in transcriptional activation or repression of interferon-regulated genes that encode the effectors of the interferon response, such as antiviral proteins, regulators of cell proliferation and differentiation, and immunoregulatory proteins. Signals mostly via binding to a IFNAR1-IFNAR2 heterodimeric receptor, but can also function with IFNAR1 alone and independently of Jak-STAT pathways. Elicits a wide variety of responses, including antiviral and antibacterial activities, and can regulate the development of B-cells, myelopoiesis and lipopolysaccharide (LPS)-inducible production of tumor necrosis factor. Plays a role in neuronal homeostasis by regulating dopamine turnover and protecting dopaminergic neurons: acts by promoting neuronal autophagy and alpha-synuclein clearance, thereby preventing dopaminergic neuron loss. IFNB1 is more potent than interferon-alpha (IFN-alpha) in inducing the apoptotic and antiproliferative pathways required for control of tumor cell growth. The polypeptide is Interferon beta (IFNB1) (Macaca fascicularis (Crab-eating macaque)).